We begin with the raw amino-acid sequence, 71 residues long: Large ribosomal subunit protein uL29 (71 aa).

This sequence belongs to the universal ribosomal protein uL29 family.

The protein is Large ribosomal subunit protein uL29 of Rickettsia canadensis (strain McKiel).